A 450-amino-acid chain; its full sequence is NADP-specific glutamate dehydrogenase (450 aa).

Residue Lys111 is part of the active site.

The protein belongs to the Glu/Leu/Phe/Val dehydrogenases family. Homohexamer.

It carries out the reaction L-glutamate + NADP(+) + H2O = 2-oxoglutarate + NH4(+) + NADPH + H(+). This Hebeloma cylindrosporum protein is NADP-specific glutamate dehydrogenase.